The primary structure comprises 504 residues: Protein FMP42 (504 aa).

At methionine 1–glutamine 11 the chain is on the vacuolar side. Residues valine 12–leucine 32 traverse the membrane as a helical segment. Over lysine 33–asparagine 64 the chain is Cytoplasmic. A helical membrane pass occupies residues phenylalanine 65–leucine 85. At aspartate 86–arginine 91 the chain is on the vacuolar side. Residues valine 92–lysine 112 form a helical membrane-spanning segment. Topologically, residues histidine 113–aspartate 119 are cytoplasmic. The chain crosses the membrane as a helical span at residues proline 120–phenylalanine 140. Residues glutamine 141 to serine 150 are Vacuolar-facing. The helical transmembrane segment at glycine 151–tyrosine 171 threads the bilayer. Residues arginine 172–arginine 186 lie on the Cytoplasmic side of the membrane. Residues phenylalanine 187–proline 207 traverse the membrane as a helical segment. Residues histidine 208–proline 302 lie on the Vacuolar side of the membrane. Serine 238, serine 249, and serine 269 each carry phosphoserine. Residues tryptophan 303–alanine 323 traverse the membrane as a helical segment. Residues threonine 324–serine 344 are Cytoplasmic-facing. The helical transmembrane segment at isoleucine 345–leucine 365 threads the bilayer. Residues aspartate 366–glycine 385 lie on the Vacuolar side of the membrane. A helical membrane pass occupies residues valine 386–valine 406. Over tyrosine 407 to lysine 421 the chain is Cytoplasmic. The chain crosses the membrane as a helical span at residues valine 422–phenylalanine 442. The Vacuolar portion of the chain corresponds to asparagine 443–phenylalanine 462. A helical membrane pass occupies residues proline 463–isoleucine 483. The Cytoplasmic segment spans residues arginine 484–isoleucine 504.

The protein belongs to the SLC43A transporter (TC 2.A.1.44) family.

The protein resides in the vacuole membrane. The sequence is that of Protein FMP42 (FMP42) from Saccharomyces cerevisiae (strain ATCC 204508 / S288c) (Baker's yeast).